Reading from the N-terminus, the 465-residue chain is UDP-N-acetylmuramate--L-alanine ligase (465 aa).

Residue 114-120 coordinates ATP; that stretch reads GAHGKTT.

Belongs to the MurCDEF family.

The protein resides in the cytoplasm. The enzyme catalyses UDP-N-acetyl-alpha-D-muramate + L-alanine + ATP = UDP-N-acetyl-alpha-D-muramoyl-L-alanine + ADP + phosphate + H(+). Its pathway is cell wall biogenesis; peptidoglycan biosynthesis. Its function is as follows. Cell wall formation. The protein is UDP-N-acetylmuramate--L-alanine ligase of Syntrophomonas wolfei subsp. wolfei (strain DSM 2245B / Goettingen).